A 321-amino-acid polypeptide reads, in one-letter code: MNSENSFSSSEHITVLLHEAVNGLALKENGIYIDGTFGRGGHSRFILSQLSSNGRLIAVDRDPRAIAEAHKIQDLRFQIEHNSFSHIPEICDKLNLVGKIDGILLDLGVSSPQLDEAERGFSFMKDGPLDMRMDTTQGLSAEEWLKQVSIEDLTWVLKTFGEERFAKRIATAIVDFNKSAVKNSTEFLSRTSQLAELISQAVPFKDKHKHPATRSFQAIRIFINSELDELESLLNSALDMLAPEGRLSIISFHSLEDRMVKHFMKKQSKGEDIPKGLPLREDQIQRNQKLRIIGKAIQPSDAEIQANPRSRSAILRVAERI.

Residues 40-42 (GGH), aspartate 60, phenylalanine 84, aspartate 106, and glutamine 113 contribute to the S-adenosyl-L-methionine site.

The protein belongs to the methyltransferase superfamily. RsmH family.

Its subcellular location is the cytoplasm. The enzyme catalyses cytidine(1402) in 16S rRNA + S-adenosyl-L-methionine = N(4)-methylcytidine(1402) in 16S rRNA + S-adenosyl-L-homocysteine + H(+). In terms of biological role, specifically methylates the N4 position of cytidine in position 1402 (C1402) of 16S rRNA. This is Ribosomal RNA small subunit methyltransferase H from Haemophilus influenzae (strain PittEE).